The primary structure comprises 152 residues: MERNSLLVCQLLCLVARAAATSTAQTTLPSTVNSTATGVTSDSYQNTTTQLPASSSAAALSLPNASAVQARSPSSFSDTYPTATALCGTLVVVGIVLCLSLASTVRSKELPSDHESLEAWEQGSDVEAPPLPEKSPCPEHVPEIRVEIPRYV.

Positions 1–20 (MERNSLLVCQLLCLVARAAA) are cleaved as a signal peptide. Positions 26–47 (TTLPSTVNSTATGVTSDSYQNT) are disordered. The span at 32 to 47 (VNSTATGVTSDSYQNT) shows a compositional bias: polar residues. Residues 85–105 (ALCGTLVVVGIVLCLSLASTV) traverse the membrane as a helical segment. The disordered stretch occupies residues 110-140 (LPSDHESLEAWEQGSDVEAPPLPEKSPCPEH).

It belongs to the HHV-5 UL124 protein family.

Its subcellular location is the host membrane. This is an uncharacterized protein from Human cytomegalovirus (strain AD169) (HHV-5).